The chain runs to 2250 residues: RNA1 polyprotein (2250 aa).

Low complexity predominate over residues 346-371 (SPTVTPSSTPSTSRSSSPEPRVSSPS). Residues 346–372 (SPTVTPSSTPSTSRSSSPEPRVSSPSG) are disordered. One can recognise an SF3 helicase domain in the interval 849 to 1020 (LRDAHNALSR…PHFHEFNLLA (172 aa)). The helical transmembrane segment at 1225–1245 (VALCAVLLVGYLIIKFAIFLF) threads the bilayer. S1299 is subject to O-(5'-phospho-RNA)-serine. The Peptidase C3 domain maps to 1319–1532 (GPEEEPSQSL…YAQIVTLDDF (214 aa)). Catalysis depends on for picornain 3C-like protease activity residues H1362, D1400, and C1495. The RdRp catalytic domain maps to 1814 to 1956 (TNWFNGDYSR…SVNDVITEKF (143 aa)).

This sequence belongs to the comoviridae genome polyprotein B family. In terms of processing, specific enzymatic cleavages by picornain 3C-like protease in vivo yield mature proteins. Picornain 3C-like protease is autocatalytically processed. Post-translationally, viral genome-linked protein (VPg) is uridylylated by the polymerase and is covalently linked to the 5'-end of genomic RNA. This uridylylated form acts as a nucleotide-peptide primer for the polymerase.

The protein resides in the host membrane. It catalyses the reaction RNA(n) + a ribonucleoside 5'-triphosphate = RNA(n+1) + diphosphate. Functionally, picornain 3C-like protease is a thiol protease that probably cleaves the B and M polyproteins. Viral genome-linked protein (VPg) plays a role in RNA replication. This Balsamorhiza sagittata (Apple) protein is RNA1 polyprotein.